We begin with the raw amino-acid sequence, 351 residues long: UDP-3-O-acylglucosamine N-acyltransferase (351 aa).

The active-site Proton acceptor is the histidine 240.

This sequence belongs to the transferase hexapeptide repeat family. LpxD subfamily. In terms of assembly, homotrimer.

The enzyme catalyses a UDP-3-O-[(3R)-3-hydroxyacyl]-alpha-D-glucosamine + a (3R)-hydroxyacyl-[ACP] = a UDP-2-N,3-O-bis[(3R)-3-hydroxyacyl]-alpha-D-glucosamine + holo-[ACP] + H(+). Its pathway is bacterial outer membrane biogenesis; LPS lipid A biosynthesis. Functionally, catalyzes the N-acylation of UDP-3-O-acylglucosamine using 3-hydroxyacyl-ACP as the acyl donor. Is involved in the biosynthesis of lipid A, a phosphorylated glycolipid that anchors the lipopolysaccharide to the outer membrane of the cell. The sequence is that of UDP-3-O-acylglucosamine N-acyltransferase from Ectopseudomonas mendocina (strain ymp) (Pseudomonas mendocina).